Reading from the N-terminus, the 332-residue chain is Lipoyl synthase (332 aa).

7 residues coordinate [4Fe-4S] cluster: cysteine 55, cysteine 60, cysteine 66, cysteine 81, cysteine 85, cysteine 88, and serine 292. The 215-residue stretch at 67–281 (WEDREATFLI…SDEAERIGFL (215 aa)) folds into the Radical SAM core domain.

The protein belongs to the radical SAM superfamily. Lipoyl synthase family. It depends on [4Fe-4S] cluster as a cofactor.

Its subcellular location is the cytoplasm. It catalyses the reaction [[Fe-S] cluster scaffold protein carrying a second [4Fe-4S](2+) cluster] + N(6)-octanoyl-L-lysyl-[protein] + 2 oxidized [2Fe-2S]-[ferredoxin] + 2 S-adenosyl-L-methionine + 4 H(+) = [[Fe-S] cluster scaffold protein] + N(6)-[(R)-dihydrolipoyl]-L-lysyl-[protein] + 4 Fe(3+) + 2 hydrogen sulfide + 2 5'-deoxyadenosine + 2 L-methionine + 2 reduced [2Fe-2S]-[ferredoxin]. It participates in protein modification; protein lipoylation via endogenous pathway; protein N(6)-(lipoyl)lysine from octanoyl-[acyl-carrier-protein]: step 2/2. Catalyzes the radical-mediated insertion of two sulfur atoms into the C-6 and C-8 positions of the octanoyl moiety bound to the lipoyl domains of lipoate-dependent enzymes, thereby converting the octanoylated domains into lipoylated derivatives. The sequence is that of Lipoyl synthase from Beutenbergia cavernae (strain ATCC BAA-8 / DSM 12333 / CCUG 43141 / JCM 11478 / NBRC 16432 / NCIMB 13614 / HKI 0122).